A 103-amino-acid chain; its full sequence is Zinc-containing ferredoxin (103 aa).

Residues 1–36 (GIDPNYRTSKPVVGDHSGHKIYGPVESPKVLGVHGT) are N-terminal extension. Zn(2+) is bound at residue histidine 19. Lysine 29 bears the N6-methyllysine mark. Histidine 34 contacts Zn(2+). 4Fe-4S ferredoxin-type domains follow at residues 35–65 (GTIV…WYET) and 74–103 (KADP…VKPP). Cysteine 45 and cysteine 51 together coordinate [3Fe-4S] cluster. Cysteine 55 is a [4Fe-4S] cluster binding site. Aspartate 76 contacts Zn(2+). Residues cysteine 83, cysteine 86, and cysteine 89 each coordinate [4Fe-4S] cluster. Cysteine 93 serves as a coordination point for [3Fe-4S] cluster.

Requires [3Fe-4S] cluster as cofactor. It depends on [4Fe-4S] cluster as a cofactor. The cofactor is Zn(2+).

Functionally, ferredoxins are iron-sulfur proteins that transfer electrons in a wide variety of metabolic reactions. The chain is Zinc-containing ferredoxin (zfx) from Sulfolobus acidocaldarius (strain ATCC 33909 / DSM 639 / JCM 8929 / NBRC 15157 / NCIMB 11770).